We begin with the raw amino-acid sequence, 138 residues long: RuBisCO chaperone RbcX (138 aa).

The disordered stretch occupies residues 118-138; sequence VDNFPSETSNGESNNNDSPPS. The segment covering 122 to 138 has biased composition (polar residues); it reads PSETSNGESNNNDSPPS.

It belongs to the RbcX family. As to quaternary structure, homodimer. Interacts with the exposed C-terminal peptide of RbcL via its central cleft, contacts a second RbcL monomer via its peripheral polar surface.

It is found in the carboxysome. It localises to the cytoplasm. Its function is as follows. An RbcL-specific chaperone. The central cleft of the RbcX homodimer (RbcX2) binds the C-terminus of an RbcL monomer, stabilizing the C-terminus and probably preventing its reassociation with chaperonin GroEL-ES. At the same time the peripheral region of RbcX2 binds a second RbcL monomer, bridging the RbcL homodimers in the correct orientation. The RbcX2(2)-bound RbcL dimers then assemble into the RbcL8 core (RbcL8-(RbcX2)8). RbcS binding triggers the release of RbcX2. This is RuBisCO chaperone RbcX from Synechocystis sp. (strain ATCC 27184 / PCC 6803 / Kazusa).